Reading from the N-terminus, the 313-residue chain is Malate dehydrogenase (313 aa).

NAD(+) is bound by residues 8–13 (GAGNVG) and Asp-33. Substrate is bound by residues Arg-83 and Arg-89. NAD(+) is bound by residues Asn-96 and 119–121 (ISN). Substrate-binding residues include Asn-121 and Arg-152. Catalysis depends on His-176, which acts as the Proton acceptor.

It belongs to the LDH/MDH superfamily. MDH type 3 family.

It carries out the reaction (S)-malate + NAD(+) = oxaloacetate + NADH + H(+). In terms of biological role, catalyzes the reversible oxidation of malate to oxaloacetate. This chain is Malate dehydrogenase, found in Bacteroides thetaiotaomicron (strain ATCC 29148 / DSM 2079 / JCM 5827 / CCUG 10774 / NCTC 10582 / VPI-5482 / E50).